The primary structure comprises 433 residues: Chitinase-like protein EN03 (433 aa).

Positions M1–A16 are cleaved as a signal peptide. The region spanning S23 to L433 is the GH18 domain. An intrachain disulfide couples C27 to C54. The N-linked (GlcNAc...) asparagine glycan is linked to N220. The cysteines at positions 337 and 418 are disulfide-linked.

Belongs to the glycosyl hydrolase 18 family. IDGF subfamily.

The protein localises to the secreted. This is Chitinase-like protein EN03 from Bombyx mori (Silk moth).